Consider the following 79-residue polypeptide: Small ribosomal subunit protein uS17 (79 aa).

It belongs to the universal ribosomal protein uS17 family. Part of the 30S ribosomal subunit.

Its function is as follows. One of the primary rRNA binding proteins, it binds specifically to the 5'-end of 16S ribosomal RNA. This is Small ribosomal subunit protein uS17 from Caulobacter vibrioides (strain NA1000 / CB15N) (Caulobacter crescentus).